Here is a 471-residue protein sequence, read N- to C-terminus: Glutamate--tRNA ligase 1 (471 aa).

The 'HIGH' region signature appears at 15–25; sequence PSPTGYLHIGG. The 'KMSKS' region motif lies at 243–247; that stretch reads KLSKR. Lys-246 contacts ATP.

It belongs to the class-I aminoacyl-tRNA synthetase family. Glutamate--tRNA ligase type 1 subfamily. As to quaternary structure, monomer.

The protein localises to the cytoplasm. The enzyme catalyses tRNA(Glu) + L-glutamate + ATP = L-glutamyl-tRNA(Glu) + AMP + diphosphate. Catalyzes the attachment of glutamate to tRNA(Glu) in a two-step reaction: glutamate is first activated by ATP to form Glu-AMP and then transferred to the acceptor end of tRNA(Glu). The chain is Glutamate--tRNA ligase 1 from Cereibacter sphaeroides (strain ATCC 17029 / ATH 2.4.9) (Rhodobacter sphaeroides).